Here is a 372-residue protein sequence, read N- to C-terminus: Cyclin-dependent kinase 9 (372 aa).

Residues 19 to 315 enclose the Protein kinase domain; the sequence is YEKLAKIGQG…SDDALNHDFF (297 aa). An ATP-binding site is contributed by 25–33; that stretch reads IGQGTFGEV. Lys-44 carries the N6-acetyllysine; by EP300/CBP, PCAF/KAT2B and GCN5/KAT2A modification. ATP contacts are provided by residues Lys-48 and 104–106; that span reads DFC. Lys-48 is modified (N6-acetyllysine; by PCAF/KAT2B and GCN5/KAT2A). Asp-149 serves as the catalytic Proton acceptor. Residues 166 to 191 are T-loop; sequence ADFGLARAFSLAKNSQPNRYTNRVVT. An ATP-binding site is contributed by Asp-167. Ser-175 carries the post-translational modification Phosphoserine. The residue at position 186 (Thr-186) is a Phosphothreonine; by CaMK1D. Positions 343–372 are disordered; that stretch reads RRKGSQITQQSTNQSRNPATTNQTEFERVF. Residue Ser-347 is modified to Phosphoserine; by CDK9 and PKA. Residues 347-366 are compositionally biased toward polar residues; it reads SQITQQSTNQSRNPATTNQT. Thr-350 is subject to Phosphothreonine; by CDK9. Phosphoserine; by CDK9 is present on Ser-353. Thr-354 bears the Phosphothreonine; by CDK9 mark. At Ser-357 the chain carries Phosphoserine; by CDK9. Thr-362 and Thr-363 each carry phosphothreonine; by CDK9.

It belongs to the protein kinase superfamily. CMGC Ser/Thr protein kinase family. CDC2/CDKX subfamily. As to quaternary structure, component of the super elongation complex (SEC), at least composed of EAF1, EAF2, CDK9, MLLT3/AF9, AFF (AFF1 or AFF4), the P-TEFb complex and ELL (ELL, ELL2 or ELL3). Associates with CCNT1/cyclin-T1, CCNT2/cyclin-T2 (isoform A and isoform B) or CCNK/cyclin-K to form active P-TEFb. P-TEFb forms a complex with AFF4/AF5Q31 and is part of the super elongation complex (SEC). Component of a complex which is composed of at least 5 members: HTATSF1/Tat-SF1, P-TEFb complex, RNA pol II, SUPT5H, and NCL/nucleolin. Associates with UBR5 and forms a transcription regulatory complex composed of CDK9, RNAP II, UBR5 and TFIIS/TCEA1 that can stimulate target gene transcription (e.g. gamma fibrinogen/FGG) by recruiting their promoters. Component of the 7SK snRNP inactive complex which is composed of at least 8 members: P-TEFb (composed of CDK9 and CCNT1/cyclin-T1), HEXIM1, HEXIM2, LARP7, BCDIN3, SART3 proteins and 7SK and U6 snRNAs. This inactive 7SK snRNP complex can also interact with NCOR1 and HDAC3, probably to regulate CDK9 acetylation. Release of P-TEFb from P-TEFb/7SK snRNP complex requires both PP2B to transduce calcium Ca(2+) signaling in response to stimuli (e.g. UV or hexamethylene bisacetamide (HMBA)), and PPP1CA to dephosphorylate Thr-186. This released P-TEFb remains inactive in the pre-initiation complex with BRD4 until new Thr-186 phosphorylation occurs after the synthesis of a short RNA. Interacts with BRD4; to target chromatin binding. Interacts with JMJD6. Interacts with activated nuclear STAT3 and RELA/p65. Binds to AR and MYOD1. Forms a complex composed of CDK9, CCNT1/cyclin-T1, EP300 and GATA4 that stimulates hypertrophy in cardiomyocytes. The large PER complex involved in the repression of transcriptional termination is composed of at least PER2, CDK9, DDX5, DHX9, NCBP1 and POLR2A (active). Interacts with HSF1. Interacts with TBX21. Interacts with WDR43. Interacts with ZMYND8; the association appears to occur between homodimeric ZMYND8 and the activated form of the P-TEFb complex. Autophosphorylation at Thr-186, Ser-347, Thr-350, Ser-353, Thr-354 and Ser-357 triggers kinase activity by promoting cyclin and substrate binding upon conformational changes. Thr-186 phosphorylation requires the calcium Ca(2+) signaling pathway, including CaMK1D and calmodulin. This inhibition is relieved by Thr-29 dephosphorylation. Phosphorylation at Ser-175 inhibits kinase activity. Can be phosphorylated on either Thr-362 or Thr-363 but not on both simultaneously. In terms of processing, dephosphorylation of Thr-186 by PPM1A and PPM1B blocks CDK9 activity and may lead to CDK9 proteasomal degradation. However, PPP1CA-mediated Thr-186 dephosphorylation is required to release P-TEFb from its inactive P-TEFb/7SK snRNP complex. Dephosphorylated at Ser-347 by the PNUTS-PP1 complex during RNA polymerase II transcription pause-release. Dephosphorylation of C-terminus Thr and Ser residues by protein phosphatase-1 (PP1) triggers CDK9 activity. Post-translationally, N6-acetylation of Lys-44 promotes kinase activity, whereas acetylation of both Lys-44 and Lys-48 mediated by PCAF/KAT2B and GCN5/KAT2A reduces kinase activity. The acetylated form associates with PML bodies in the nuclear matrix and with the transcriptionally silent HIV-1 genome; deacetylated upon transcription stimulation. Deacetylated by SIRT7, promoting the kinase activity and subsequent 'Ser-2' phosphorylation of the C-terminal domain (CTD) of RNA polymerase II. Polyubiquitinated and thus activated by UBR5. This ubiquitination is promoted by TFIIS/TCEA1 and favors 'Ser-2' phosphorylation of RPB1/POLR2A CTD. Expressed at high levels in brain and kidney.

It is found in the nucleus. Its subcellular location is the cytoplasm. The protein localises to the PML body. It catalyses the reaction L-seryl-[protein] + ATP = O-phospho-L-seryl-[protein] + ADP + H(+). It carries out the reaction L-threonyl-[protein] + ATP = O-phospho-L-threonyl-[protein] + ADP + H(+). The enzyme catalyses [DNA-directed RNA polymerase] + ATP = phospho-[DNA-directed RNA polymerase] + ADP + H(+). Its activity is regulated as follows. Activation by Thr-186 phosphorylation is calcium Ca(2+) signaling pathway-dependent; actively inactivated by dephosphorylation mediated by PPP1CA, PPM1A and PPM1B. Reversibly repressed by acetylation at Lys-44 and Lys-48. Functionally, protein kinase involved in the regulation of transcription. Member of the cyclin-dependent kinase pair (CDK9/cyclin-T) complex, also called positive transcription elongation factor b (P-TEFb), which facilitates the transition from abortive to productive elongation by phosphorylating the CTD (C-terminal domain) of the large subunit of RNA polymerase II (RNAP II) POLR2A, SUPT5H and RDBP. This complex is inactive when in the 7SK snRNP complex form. Phosphorylates EP300, MYOD1, RPB1/POLR2A and AR and the negative elongation factors DSIF and NELFE. Regulates cytokine inducible transcription networks by facilitating promoter recognition of target transcription factors (e.g. TNF-inducible RELA/p65 activation and IL-6-inducible STAT3 signaling). Promotes RNA synthesis in genetic programs for cell growth, differentiation and viral pathogenesis. P-TEFb is also involved in cotranscriptional histone modification, mRNA processing and mRNA export. Modulates a complex network of chromatin modifications including histone H2B monoubiquitination (H2Bub1), H3 lysine 4 trimethylation (H3K4me3) and H3K36me3; integrates phosphorylation during transcription with chromatin modifications to control co-transcriptional histone mRNA processing. The CDK9/cyclin-K complex has also a kinase activity towards CTD of RNAP II and can substitute for CDK9/cyclin-T P-TEFb in vitro. Replication stress response protein; the CDK9/cyclin-K complex is required for genome integrity maintenance, by promoting cell cycle recovery from replication arrest and limiting single-stranded DNA amount in response to replication stress, thus reducing the breakdown of stalled replication forks and avoiding DNA damage. In addition, probable function in DNA repair of isoform 2 via interaction with KU70/XRCC6. Promotes cardiac myocyte enlargement. RPB1/POLR2A phosphorylation on 'Ser-2' in CTD activates transcription. AR phosphorylation modulates AR transcription factor promoter selectivity and cell growth. DSIF and NELF phosphorylation promotes transcription by inhibiting their negative effect. The phosphorylation of MYOD1 enhances its transcriptional activity and thus promotes muscle differentiation. Catalyzes phosphorylation of KAT5, promoting KAT5 recruitment to chromatin and histone acetyltransferase activity. This Mus musculus (Mouse) protein is Cyclin-dependent kinase 9 (Cdk9).